Consider the following 157-residue polypeptide: SsrA-binding protein (157 aa).

A disordered region spans residues 132–157; the sequence is VHDKRQAQKDKDWAREKDRLFKKAYK. Basic and acidic residues predominate over residues 135-157; that stretch reads KRQAQKDKDWAREKDRLFKKAYK.

Belongs to the SmpB family.

The protein localises to the cytoplasm. Required for rescue of stalled ribosomes mediated by trans-translation. Binds to transfer-messenger RNA (tmRNA), required for stable association of tmRNA with ribosomes. tmRNA and SmpB together mimic tRNA shape, replacing the anticodon stem-loop with SmpB. tmRNA is encoded by the ssrA gene; the 2 termini fold to resemble tRNA(Ala) and it encodes a 'tag peptide', a short internal open reading frame. During trans-translation Ala-aminoacylated tmRNA acts like a tRNA, entering the A-site of stalled ribosomes, displacing the stalled mRNA. The ribosome then switches to translate the ORF on the tmRNA; the nascent peptide is terminated with the 'tag peptide' encoded by the tmRNA and targeted for degradation. The ribosome is freed to recommence translation, which seems to be the essential function of trans-translation. The chain is SsrA-binding protein from Francisella tularensis subsp. novicida (strain U112).